Reading from the N-terminus, the 468-residue chain is 3-isopropylmalate dehydratase large subunit (468 aa).

A disordered region spans residues 53–74 (QPSKTVATMDHNVPTDSRDLAG). [4Fe-4S] cluster-binding residues include C347, C407, and C410.

This sequence belongs to the aconitase/IPM isomerase family. LeuC type 1 subfamily. Heterodimer of LeuC and LeuD. It depends on [4Fe-4S] cluster as a cofactor.

The catalysed reaction is (2R,3S)-3-isopropylmalate = (2S)-2-isopropylmalate. It functions in the pathway amino-acid biosynthesis; L-leucine biosynthesis; L-leucine from 3-methyl-2-oxobutanoate: step 2/4. Functionally, catalyzes the isomerization between 2-isopropylmalate and 3-isopropylmalate, via the formation of 2-isopropylmaleate. This chain is 3-isopropylmalate dehydratase large subunit, found in Pasteurella multocida (strain Pm70).